Here is a 468-residue protein sequence, read N- to C-terminus: UDP-N-acetylmuramate--L-alanine ligase (468 aa).

Residue Gly-112–Thr-118 participates in ATP binding.

It belongs to the MurCDEF family.

It localises to the cytoplasm. The catalysed reaction is UDP-N-acetyl-alpha-D-muramate + L-alanine + ATP = UDP-N-acetyl-alpha-D-muramoyl-L-alanine + ADP + phosphate + H(+). The protein operates within cell wall biogenesis; peptidoglycan biosynthesis. Functionally, cell wall formation. This is UDP-N-acetylmuramate--L-alanine ligase from Bordetella pertussis (strain Tohama I / ATCC BAA-589 / NCTC 13251).